The primary structure comprises 155 residues: Pathogenesis-related protein STH-2 (155 aa).

It belongs to the BetVI family.

The protein is Pathogenesis-related protein STH-2 (STH-2) of Solanum tuberosum (Potato).